Here is a 921-residue protein sequence, read N- to C-terminus: Isoleucine--tRNA ligase (921 aa).

Residues 57–67 carry the 'HIGH' region motif; it reads PYANGDIHMGH. An L-isoleucyl-5'-AMP-binding site is contributed by Glu552. Positions 593–597 match the 'KMSKS' region motif; it reads KMSKS. Lys596 contributes to the ATP binding site. Residues Cys888, Cys891, Cys908, and Cys911 each coordinate Zn(2+).

This sequence belongs to the class-I aminoacyl-tRNA synthetase family. IleS type 1 subfamily. In terms of assembly, monomer. Zn(2+) is required as a cofactor.

The protein localises to the cytoplasm. The catalysed reaction is tRNA(Ile) + L-isoleucine + ATP = L-isoleucyl-tRNA(Ile) + AMP + diphosphate. Its function is as follows. Catalyzes the attachment of isoleucine to tRNA(Ile). As IleRS can inadvertently accommodate and process structurally similar amino acids such as valine, to avoid such errors it has two additional distinct tRNA(Ile)-dependent editing activities. One activity is designated as 'pretransfer' editing and involves the hydrolysis of activated Val-AMP. The other activity is designated 'posttransfer' editing and involves deacylation of mischarged Val-tRNA(Ile). The polypeptide is Isoleucine--tRNA ligase (Bacillus cytotoxicus (strain DSM 22905 / CIP 110041 / 391-98 / NVH 391-98)).